The chain runs to 362 residues: Aminomethyltransferase (362 aa).

It belongs to the GcvT family. The glycine cleavage system is composed of four proteins: P, T, L and H.

It catalyses the reaction N(6)-[(R)-S(8)-aminomethyldihydrolipoyl]-L-lysyl-[protein] + (6S)-5,6,7,8-tetrahydrofolate = N(6)-[(R)-dihydrolipoyl]-L-lysyl-[protein] + (6R)-5,10-methylene-5,6,7,8-tetrahydrofolate + NH4(+). The glycine cleavage system catalyzes the degradation of glycine. The sequence is that of Aminomethyltransferase from Chromobacterium violaceum (strain ATCC 12472 / DSM 30191 / JCM 1249 / CCUG 213 / NBRC 12614 / NCIMB 9131 / NCTC 9757 / MK).